Reading from the N-terminus, the 663-residue chain is Leishmanolysin-like peptidase (663 aa).

Position 246 (histidine 246) interacts with Zn(2+). Glutamate 247 is a catalytic residue. Positions 250 and 353 each coordinate Zn(2+).

Belongs to the peptidase M8 family. It depends on Zn(2+) as a cofactor.

The protein localises to the cytoplasm. Metalloprotease. The protein is Leishmanolysin-like peptidase of Caenorhabditis briggsae.